Consider the following 231-residue polypeptide: ATP-dependent dethiobiotin synthetase BioD 2 (231 aa).

13-18 (SVGKTV) is a binding site for ATP. T17 contacts Mg(2+). Residue K38 is part of the active site. Residues D55, 112-115 (EGTG), 172-173 (NR), 201-203 (PYL), and Q208 each bind ATP. Residues D55 and E112 each coordinate Mg(2+).

It belongs to the dethiobiotin synthetase family. As to quaternary structure, homodimer. Mg(2+) is required as a cofactor.

It localises to the cytoplasm. It catalyses the reaction (7R,8S)-7,8-diammoniononanoate + CO2 + ATP = (4R,5S)-dethiobiotin + ADP + phosphate + 3 H(+). It participates in cofactor biosynthesis; biotin biosynthesis; biotin from 7,8-diaminononanoate: step 1/2. In terms of biological role, catalyzes a mechanistically unusual reaction, the ATP-dependent insertion of CO2 between the N7 and N8 nitrogen atoms of 7,8-diaminopelargonic acid (DAPA, also called 7,8-diammoniononanoate) to form a ureido ring. This is ATP-dependent dethiobiotin synthetase BioD 2 from Salmonella typhi.